We begin with the raw amino-acid sequence, 499 residues long: Rhodopsin, GQ-coupled (499 aa).

The Extracellular portion of the chain corresponds to 1–50; that stretch reads MADNKSTLPGLPDINGTLNRSMTPNTGWEGPYDMSVHLHWTQFPPVTEEW. Asn4, Asn15, and Asn19 each carry an N-linked (GlcNAc...) asparagine glycan. The chain crosses the membrane as a helical span at residues 51 to 75; sequence HYIIGVYITIVGLLGIMGNTTVVYI. The Cytoplasmic portion of the chain corresponds to 76 to 87; the sequence is FSNTKSLRSPSN. A helical membrane pass occupies residues 88 to 114; sequence LFVVNLAVSDLIFSAVNGFPLLTVSSF. Topologically, residues 115 to 128 are extracellular; that stretch reads HQKWIFGSLFCQLY. A disulfide bond links Cys125 and Cys203. Residues 129–148 form a helical membrane-spanning segment; the sequence is GFVGGVFGLMSINTLTAISI. Over 149-168 the chain is Cytoplasmic; the sequence is DRYVVITKPLQASQTMTRRK. A helical membrane pass occupies residues 169-192; it reads VHLMIVIVWVLSILLSIPPFFGWG. At 193–216 the chain is on the extracellular side; the sequence is AYIPEGFQTSCTFDYLTKTARTRT. The helical transmembrane segment at 217–244 threads the bilayer; sequence YIVVLYLFGFLIPLIIIGVCYVLIIRGV. Residues 245–278 lie on the Cytoplasmic side of the membrane; that stretch reads RRHDQKMLTITRSMKTEDARANNKRARSELRISK. Residues 279-302 traverse the membrane as a helical segment; that stretch reads IAMTVTCLFIISWSPYAIIALIAQ. Residues 303–310 lie on the Extracellular side of the membrane; that stretch reads FGPAHWIT. The helical transmembrane segment at 311–335 threads the bilayer; sequence PLVSELPMMLAKSSSMHNPVVYALS. Lys322 carries the post-translational modification N6-(retinylidene)lysine. Residues 336–499 lie on the Cytoplasmic side of the membrane; the sequence is HPKFRKALYQ…QRVNGLTFNS (164 aa). Residues Cys353 and Cys354 are each lipidated (S-palmitoyl cysteine).

It belongs to the G-protein coupled receptor 1 family. Opsin subfamily. In terms of processing, phosphorylated on some or all of the serine and threonine residues present in the C-terminal region. Retina. Expressed in the depolarizing cell layer of the photoreceptor cells distant from the lens.

The protein resides in the membrane. Its function is as follows. Visual pigments such as rhodopsin and porphyropsin are light-absorbing molecules that mediate vision. Rhodopsin consists of an apoprotein, opsin, covalently linked to 11-cis-retinal. This receptor is coupled to the activation of phospholipase C. Porphyropsin consists of opsin covalently linked to 11-cis 3,4-didehydroretinal. This is Rhodopsin, GQ-coupled (SCOP1) from Mizuhopecten yessoensis (Japanese scallop).